The chain runs to 488 residues: Neisserial heparin binding antigen (488 aa).

The signal sequence occupies residues 1–17 (MFKRSVIAMACIFALSA). Cys18 carries the N-palmitoyl cysteine lipid modification. Cys18 is lipidated: S-diacylglycerol cysteine. The segment at 21–201 (GGGGSPDVKS…NPAPANGGSN (181 aa)) is disordered. Positions 43 to 53 (SEKETEAKEDA) are enriched in basic and acidic residues. A compositionally biased stretch (low complexity) spans 54–70 (PQAGSQGQGAPSAQGSQ). Composition is skewed to polar residues over residues 101-118 (DMPQ…NHTP) and 127-142 (MENQ…QPAN). Positions 160 to 183 (AGGQNAGNTAAQGANQAGNNQAAG) are enriched in low complexity. The Arg-rich motif motif lies at 296-306 (RFRRSARSRRS). Residues 306 to 488 (SLPAEMPLIP…GVFAGKKEQD (183 aa)) are C1 fragment.

This sequence belongs to the NHBA family. In terms of assembly, the C-terminal beta-barrel forms a monomer. Post-translationally, cleaved in vivo by the Neisserial phase-variable autotransporter/serine protease NalP to give 2 fragments. The N-terminus remains in the cell outer membrane while the 22 kDa C-terminus (beginning on Ser-293) is soluble; this soluble fragment is called C2. Cleaved in vitro by human lactoferrin (LTF, between Arg-305 and Ser-306), this fragment is called C1. Cleavage by NalP or lactoferrin does not alter killing of Neisseria by bactericidal antibodies in vitro. Recombinant and cell surface protein is cleaved by human saliva kallikrein (KLK1) between Ser-303 and Arg-304; in saliva kallikrein is more active on NHBA than lactoferrin. Human plasma kallikrein (KLKB1) cleaves in a similar manner to KLK1.

It is found in the cell outer membrane. The protein resides in the cell surface. Its subcellular location is the host mitochondrion. Its function is as follows. A major human immunogenic protein detected in patients recovering from meningitidis, where it induces bactericidal antibodies. Binds heparin and heparan sulfate proteoglycan in vitro via the Arg-rich motif. Heparin-binding to this protein protects bacteria against killing by bactericidal antibodies (serum killing). Binds to human cells via the Arg-rich region; binding may require the intact protein as protein fragments do not bind to human cells. Protein binding to human cells is abolished by treatment with heparinase III but not chondroitinase ABC. The bacteria binds a number of human extracellular sialyated and/or sulfated glycans via this protein, including chondroitin sulfate (KD=5.2 nM), heparin (KD=52 nM) and ganglioside GT3 (KD=210 nM). The recombinant protein binds DNA non-specifically. Plays a role in extracellular-DNA (eDNA) mediated biofilm formation. In strain MC58 eDNA stimulates biofilm formation. When NHBA is not processed by NalP there is an increase in positively charged, NHBA- and IgA-derived DNA-binding peptides on the cell surface, resulting in increased DNA-binding peptides and increased biofilm formation. Functionally, [C2 fragment] Localizes to host mitochondria when applied to the apical side of human endothelial cell layers, where it induces production of reactive oxygen species which lead to increased permeability of host endothelial cells. The C1 fragment (which lacks the first 14 residues of C2) does not have this effect. It is not known if this occurs during Neisseria infections. The protein is Neisserial heparin binding antigen of Neisseria meningitidis serogroup B (strain ATCC BAA-335 / MC58).